The chain runs to 529 residues: Putative UPF0481 protein At3g02645 (529 aa).

2 N-linked (GlcNAc...) asparagine glycosylation sites follow: asparagine 365 and asparagine 403. The helical transmembrane segment at 498–518 threads the bilayer; the sequence is ILAFLAAVLLLMLVSLQLFSL.

It belongs to the UPF0481 family.

It is found in the membrane. This Arabidopsis thaliana (Mouse-ear cress) protein is Putative UPF0481 protein At3g02645.